A 94-amino-acid chain; its full sequence is Small ribosomal subunit protein bS18 (94 aa).

The protein belongs to the bacterial ribosomal protein bS18 family. In terms of assembly, part of the 30S ribosomal subunit. Forms a tight heterodimer with protein bS6.

Functionally, binds as a heterodimer with protein bS6 to the central domain of the 16S rRNA, where it helps stabilize the platform of the 30S subunit. The chain is Small ribosomal subunit protein bS18 from Albidiferax ferrireducens (strain ATCC BAA-621 / DSM 15236 / T118) (Rhodoferax ferrireducens).